Reading from the N-terminus, the 178-residue chain is RNA pyrophosphohydrolase (178 aa).

In terms of domain architecture, Nudix hydrolase spans 18 to 171 (PYRPCVGLMV…KRKVYEQVVA (154 aa)). The Nudix box signature appears at 59–80 (GGIDKGEDPAQAALRELYEETG).

It belongs to the Nudix hydrolase family. RppH subfamily. A divalent metal cation serves as cofactor.

Its function is as follows. Accelerates the degradation of transcripts by removing pyrophosphate from the 5'-end of triphosphorylated RNA, leading to a more labile monophosphorylated state that can stimulate subsequent ribonuclease cleavage. The polypeptide is RNA pyrophosphohydrolase (Brucella abortus (strain 2308)).